Consider the following 440-residue polypeptide: C4-dicarboxylate transport protein (440 aa).

A run of 8 helical transmembrane segments spans residues 8-28 (LYLQVLLAVVLGALVGHLFPA), 40-60 (FIKLVKMLIAPIVFATVVTGI), 74-94 (LKGLLYFEVLTTVALAIGLVV), 147-167 (GDILQVLLFSVLFGAALAALK), 187-207 (IVGFVMRLAPVGAFGAMAFTV), 221-241 (LIACFYATSALFVVLMLGLVL), 288-308 (VVGLVVPMGYSFNLDGTSIYL), and 354-374 (AATLSAVGNIPVAGLALLLGV). The segment at 419–440 (EEVEPANEPEPPAIPAGAGLHG) is disordered.

This sequence belongs to the dicarboxylate/amino acid:cation symporter (DAACS) (TC 2.A.23) family.

The protein localises to the cell inner membrane. Responsible for the transport of dicarboxylates such as succinate, fumarate, and malate from the periplasm across the membrane. The polypeptide is C4-dicarboxylate transport protein (Anaeromyxobacter sp. (strain K)).